Consider the following 240-residue polypeptide: Biosynthetic peptidoglycan transglycosylase (240 aa).

Residues Trp15 to Phe35 form a helical membrane-spanning segment.

Belongs to the glycosyltransferase 51 family.

The protein resides in the cell inner membrane. The enzyme catalyses [GlcNAc-(1-&gt;4)-Mur2Ac(oyl-L-Ala-gamma-D-Glu-L-Lys-D-Ala-D-Ala)](n)-di-trans,octa-cis-undecaprenyl diphosphate + beta-D-GlcNAc-(1-&gt;4)-Mur2Ac(oyl-L-Ala-gamma-D-Glu-L-Lys-D-Ala-D-Ala)-di-trans,octa-cis-undecaprenyl diphosphate = [GlcNAc-(1-&gt;4)-Mur2Ac(oyl-L-Ala-gamma-D-Glu-L-Lys-D-Ala-D-Ala)](n+1)-di-trans,octa-cis-undecaprenyl diphosphate + di-trans,octa-cis-undecaprenyl diphosphate + H(+). The protein operates within cell wall biogenesis; peptidoglycan biosynthesis. In terms of biological role, peptidoglycan polymerase that catalyzes glycan chain elongation from lipid-linked precursors. This is Biosynthetic peptidoglycan transglycosylase from Paraburkholderia xenovorans (strain LB400).